Here is a 344-residue protein sequence, read N- to C-terminus: Arginine N-succinyltransferase (344 aa).

Leucine 125 is a binding site for succinyl-CoA. Histidine 229 acts as the Proton donor in catalysis.

This sequence belongs to the arginine N-succinyltransferase family.

The catalysed reaction is succinyl-CoA + L-arginine = N(2)-succinyl-L-arginine + CoA + H(+). Its pathway is amino-acid degradation; L-arginine degradation via AST pathway; L-glutamate and succinate from L-arginine: step 1/5. Its function is as follows. Catalyzes the transfer of succinyl-CoA to arginine to produce N(2)-succinylarginine. The sequence is that of Arginine N-succinyltransferase from Shigella boydii serotype 4 (strain Sb227).